A 279-amino-acid chain; its full sequence is Tryptophan 2,3-dioxygenase (279 aa).

Substrate contacts are provided by residues 48 to 52 (FIIQH), Tyr110, and Arg114. His237 serves as a coordination point for heme. Thr251 contacts substrate.

This sequence belongs to the tryptophan 2,3-dioxygenase family. In terms of assembly, homotetramer. Heme serves as cofactor.

The enzyme catalyses L-tryptophan + O2 = N-formyl-L-kynurenine. The protein operates within amino-acid degradation; L-tryptophan degradation via kynurenine pathway; L-kynurenine from L-tryptophan: step 1/2. Functionally, heme-dependent dioxygenase that catalyzes the oxidative cleavage of the L-tryptophan (L-Trp) pyrrole ring and converts L-tryptophan to N-formyl-L-kynurenine. Catalyzes the oxidative cleavage of the indole moiety. This chain is Tryptophan 2,3-dioxygenase, found in Bradyrhizobium sp. (strain ORS 278).